We begin with the raw amino-acid sequence, 236 residues long: MKVIIVKDNVEGGKEGYKLFADAKKNGATTFGLATGSTPITTYQEIIKSDLDFTDSISINLDEYVGLPEDSDQSYDYFMHENLFNAKPFKHSYLPNGRAADLEAEAKHYDQIIEDNPIDLQILGIGRNGHIGFNEPGTPADSTTHKVSLTQSTIDANARFFEHEEDVPRYAISMGLASIMKSKHILIEAYGEDKADAIKGMIEGPVTTDLPASVLQNHDNVTVIIDEAAASKLSNK.

The active-site Proton acceptor; for enolization step is Asp62. The For ring-opening step role is filled by Asn128. Residue His130 is the Proton acceptor; for ring-opening step of the active site. Glu135 acts as the For ring-opening step in catalysis.

It belongs to the glucosamine/galactosamine-6-phosphate isomerase family. NagB subfamily.

It catalyses the reaction alpha-D-glucosamine 6-phosphate + H2O = beta-D-fructose 6-phosphate + NH4(+). The protein operates within amino-sugar metabolism; N-acetylneuraminate degradation; D-fructose 6-phosphate from N-acetylneuraminate: step 5/5. Its function is as follows. Catalyzes the reversible isomerization-deamination of glucosamine 6-phosphate (GlcN6P) to form fructose 6-phosphate (Fru6P) and ammonium ion. This is Glucosamine-6-phosphate deaminase from Pediococcus pentosaceus (strain ATCC 25745 / CCUG 21536 / LMG 10740 / 183-1w).